The sequence spans 893 residues: Translation initiation factor IF-2 (893 aa).

Disordered stretches follow at residues 51 to 203 (KEHG…AEAE) and 216 to 300 (EENE…SMQH). Composition is skewed to basic and acidic residues over residues 102-203 (ALEE…AEAE), 216-238 (EENE…DADY), and 245-261 (HARE…EQQP). Residues 392 to 561 (GRAPVVTIMG…LLQSEVLELT (170 aa)) form the tr-type G domain. Residues 401 to 408 (GHVDHGKT) are G1. 401-408 (GHVDHGKT) contacts GTP. Positions 426–430 (GITQH) are G2. The interval 447–450 (DTPG) is G3. Residues 447–451 (DTPGH) and 501–504 (NKID) each bind GTP. Residues 501 to 504 (NKID) are G4. The segment at 537–539 (SAK) is G5.

This sequence belongs to the TRAFAC class translation factor GTPase superfamily. Classic translation factor GTPase family. IF-2 subfamily.

It localises to the cytoplasm. One of the essential components for the initiation of protein synthesis. Protects formylmethionyl-tRNA from spontaneous hydrolysis and promotes its binding to the 30S ribosomal subunits. Also involved in the hydrolysis of GTP during the formation of the 70S ribosomal complex. In Aliivibrio fischeri (strain MJ11) (Vibrio fischeri), this protein is Translation initiation factor IF-2.